A 108-amino-acid polypeptide reads, in one-letter code: Translation initiation factor 1A (108 aa).

An S1-like domain is found at 11–85 (SVKEVPKPAE…NKCDIIYKYS (75 aa)).

It belongs to the eIF-1A family.

In terms of biological role, seems to be required for maximal rate of protein biosynthesis. Enhances ribosome dissociation into subunits and stabilizes the binding of the initiator Met-tRNA(I) to 40 S ribosomal subunits. In Sulfurisphaera tokodaii (strain DSM 16993 / JCM 10545 / NBRC 100140 / 7) (Sulfolobus tokodaii), this protein is Translation initiation factor 1A (eIF1A).